The following is a 414-amino-acid chain: Putative competence-damage inducible protein (414 aa).

This sequence belongs to the CinA family.

This chain is Putative competence-damage inducible protein, found in Geobacillus kaustophilus (strain HTA426).